A 494-amino-acid polypeptide reads, in one-letter code: NAD(+) hydrolase ThsA (494 aa).

One can recognise a Deacetylase sirtuin-type domain in the interval 11-295 (ATDKEVLIKE…TILQRYCRSK (285 aa)). Residues Ala30, Asp119, and His157 each coordinate NAD(+). His157 acts as the Proton acceptor in catalysis. The interval 296 to 494 (ILISGSAVEY…KIITALRAGR (199 aa)) is SLOG (STALD) domain, binds 3'cADPR. Positions 300, 301, 339, 370, 388, 405, 416, and 420 each coordinate 3'cADPR.

This sequence belongs to the soluble Thoeris ThsA family. As to quaternary structure, homotetramer.

It localises to the cytoplasm. It carries out the reaction NAD(+) + H2O = ADP-D-ribose + nicotinamide + H(+). Its activity is regulated as follows. Probably activated by a signal molecule generated by endogenous ThsB1 and/or ThsB2. Can also be activated by the signal generated by ThsB of B.cereus. The activating molecule might be 3' cyclic ADP-D-ribose (3'cADPR). Its function is as follows. Probable NAD(+) hydrolyzing component (NADase) of the Thoeris antiviral defense system, composed of ThsA, TIR1 (thsB1) and TIR2 (thsB2). Activated by a signal molecule generated by endogenous TIR1, TIR2 or ThsB from B.cereus. After activation it binds and hydrolyzes NAD(+), leading to cell death and inhibition of phage replication. Expression of Thoeris in B.subtilis (strain BEST7003) confers resistance to phages phi29, phi3T, SPBeta, SBSphi11, SBSphi13, SBSphiJ, SPO1 and SPR but not SBSphiC. The TIR paralogs confer overlapping resistance to different phages. In Cytobacillus dafuensis (Bacillus dafuensis), this protein is NAD(+) hydrolase ThsA.